Consider the following 490-residue polypeptide: MVPVVALVGRPNVGKSTLFNRLTRTRDALVADFPGLTRDRKYGRAEIEGREFICIDTGGIDGTEDGVETRMAEQSLLAIEEADVVLFMVDARAGLMPADEAIAKHLRSREKPTFLVANKTDGLDPDQAVVDFYSLGLGEIYPIAASHGRGVLSLLEHVLLPWMEDLAPQEEVDEDAEYWAQFEAEENGEEEEEDDFDPQSLPIKLAIVGRPNVGKSTLTNRILGEERVVVYDMPGTTRDSIYIPMERDGREYVLIDTAGVRKRGKITDAVEKFSVIKTLQAIEDANVVMLVIDAREGISDQDLSLLGFILNSGRSLVIVVNKWDGLSQEVKEQVKETLDFRLGFIDFARVHFISALHGSGVGNLFESVREAYDSSTRRVGTSMLTRIMTMAVEDHQPPLVRGRRVKLKYAHAGGYNPPIVVIHGNQVKDLPDSYKRYLMNYFRKSLDVMGSPIRIQFKEGENPYANKRNTLTPTQMRKRKRLMKHIKKNK.

EngA-type G domains lie at 3–166 (PVVA…MEDL) and 203–376 (IKLA…DSST). GTP is bound by residues 9–16 (GRPNVGKS), 56–60 (DTGGI), 118–121 (NKTD), 209–216 (GRPNVGKS), 256–260 (DTAGV), and 321–324 (NKWD). One can recognise a KH-like domain in the interval 377 to 461 (RRVGTSMLTR…PIRIQFKEGE (85 aa)).

This sequence belongs to the TRAFAC class TrmE-Era-EngA-EngB-Septin-like GTPase superfamily. EngA (Der) GTPase family. Associates with the 50S ribosomal subunit.

Its function is as follows. GTPase that plays an essential role in the late steps of ribosome biogenesis. This chain is GTPase Der, found in Escherichia coli O157:H7.